A 487-amino-acid polypeptide reads, in one-letter code: Putative sugar kinase YoaC (487 aa).

This sequence belongs to the FGGY kinase family.

In Bacillus subtilis (strain 168), this protein is Putative sugar kinase YoaC (yoaC).